Reading from the N-terminus, the 206-residue chain is Octanoyltransferase (206 aa).

Positions 30–206 constitute a BPL/LPL catalytic domain; sequence PETNDEIWLV…EFVTLLNNSI (177 aa). Residues 69–76, 137–139, and 150–152 each bind substrate; these read RGGQVTYH, SLG, and GIA. The active-site Acyl-thioester intermediate is Cys168.

This sequence belongs to the LipB family.

It localises to the cytoplasm. It catalyses the reaction octanoyl-[ACP] + L-lysyl-[protein] = N(6)-octanoyl-L-lysyl-[protein] + holo-[ACP] + H(+). The protein operates within protein modification; protein lipoylation via endogenous pathway; protein N(6)-(lipoyl)lysine from octanoyl-[acyl-carrier-protein]: step 1/2. Its function is as follows. Catalyzes the transfer of endogenously produced octanoic acid from octanoyl-acyl-carrier-protein onto the lipoyl domains of lipoate-dependent enzymes. Lipoyl-ACP can also act as a substrate although octanoyl-ACP is likely to be the physiological substrate. In Francisella tularensis subsp. tularensis (strain FSC 198), this protein is Octanoyltransferase.